The chain runs to 128 residues: Aspartate 1-decarboxylase (128 aa).

Ser-25 acts as the Schiff-base intermediate with substrate; via pyruvic acid in catalysis. Residue Ser-25 is modified to Pyruvic acid (Ser). Thr-57 contacts substrate. The active-site Proton donor is the Tyr-58. 73 to 75 lines the substrate pocket; it reads GSA.

Belongs to the PanD family. Heterooctamer of four alpha and four beta subunits. Pyruvate is required as a cofactor. Post-translationally, is synthesized initially as an inactive proenzyme, which is activated by self-cleavage at a specific serine bond to produce a beta-subunit with a hydroxyl group at its C-terminus and an alpha-subunit with a pyruvoyl group at its N-terminus.

It is found in the cytoplasm. The catalysed reaction is L-aspartate + H(+) = beta-alanine + CO2. It functions in the pathway cofactor biosynthesis; (R)-pantothenate biosynthesis; beta-alanine from L-aspartate: step 1/1. Catalyzes the pyruvoyl-dependent decarboxylation of aspartate to produce beta-alanine. The chain is Aspartate 1-decarboxylase from Burkholderia pseudomallei (strain 668).